We begin with the raw amino-acid sequence, 363 residues long: 3-isopropylmalate dehydrogenase (363 aa).

78–91 (GPKWEHLPPAEQPE) contacts NAD(+). Residues Arg99, Arg109, Arg138, and Asp227 each contribute to the substrate site. Residues Asp227, Asp251, and Asp255 each coordinate Mg(2+). 285-297 (GSAPDIAGKGIAN) contributes to the NAD(+) binding site.

Belongs to the isocitrate and isopropylmalate dehydrogenases family. LeuB type 1 subfamily. In terms of assembly, homodimer. It depends on Mg(2+) as a cofactor. The cofactor is Mn(2+).

The protein localises to the cytoplasm. The catalysed reaction is (2R,3S)-3-isopropylmalate + NAD(+) = 4-methyl-2-oxopentanoate + CO2 + NADH. Its pathway is amino-acid biosynthesis; L-leucine biosynthesis; L-leucine from 3-methyl-2-oxobutanoate: step 3/4. Its function is as follows. Catalyzes the oxidation of 3-carboxy-2-hydroxy-4-methylpentanoate (3-isopropylmalate) to 3-carboxy-4-methyl-2-oxopentanoate. The product decarboxylates to 4-methyl-2 oxopentanoate. This is 3-isopropylmalate dehydrogenase from Photorhabdus laumondii subsp. laumondii (strain DSM 15139 / CIP 105565 / TT01) (Photorhabdus luminescens subsp. laumondii).